Here is a 272-residue protein sequence, read N- to C-terminus: Putative pyruvate, phosphate dikinase regulatory protein (272 aa).

153-160 (GVSRTSKT) is a binding site for ADP.

Belongs to the pyruvate, phosphate/water dikinase regulatory protein family. PDRP subfamily.

It catalyses the reaction N(tele)-phospho-L-histidyl/L-threonyl-[pyruvate, phosphate dikinase] + ADP = N(tele)-phospho-L-histidyl/O-phospho-L-threonyl-[pyruvate, phosphate dikinase] + AMP + H(+). The enzyme catalyses N(tele)-phospho-L-histidyl/O-phospho-L-threonyl-[pyruvate, phosphate dikinase] + phosphate + H(+) = N(tele)-phospho-L-histidyl/L-threonyl-[pyruvate, phosphate dikinase] + diphosphate. In terms of biological role, bifunctional serine/threonine kinase and phosphorylase involved in the regulation of the pyruvate, phosphate dikinase (PPDK) by catalyzing its phosphorylation/dephosphorylation. The chain is Putative pyruvate, phosphate dikinase regulatory protein from Streptococcus sanguinis (strain SK36).